The chain runs to 728 residues: Elongation factor 2 (728 aa).

The tr-type G domain occupies 18–258 (KFIRNIGIVA…MVIRHLPSPI (241 aa)). Residues 27 to 34 (AHIDHGKT), 93 to 97 (DTPGH), and 147 to 150 (NKVD) each bind GTP. H594 is subject to Diphthamide.

It belongs to the TRAFAC class translation factor GTPase superfamily. Classic translation factor GTPase family. EF-G/EF-2 subfamily.

Its subcellular location is the cytoplasm. In terms of biological role, catalyzes the GTP-dependent ribosomal translocation step during translation elongation. During this step, the ribosome changes from the pre-translocational (PRE) to the post-translocational (POST) state as the newly formed A-site-bound peptidyl-tRNA and P-site-bound deacylated tRNA move to the P and E sites, respectively. Catalyzes the coordinated movement of the two tRNA molecules, the mRNA and conformational changes in the ribosome. In Archaeoglobus fulgidus (strain ATCC 49558 / DSM 4304 / JCM 9628 / NBRC 100126 / VC-16), this protein is Elongation factor 2 (fusA).